Reading from the N-terminus, the 702-residue chain is Polyribonucleotide nucleotidyltransferase (702 aa).

Mg(2+) is bound by residues aspartate 485 and aspartate 491. The KH domain maps to 552-611 (PKTSTLQIDPEKIRDVIGAGGKVINKIIADTGVKIDIKEDGLVYVSSAESEGVKEAVKII). Positions 621–689 (GEIYLGKVTK…SQGRINLSRK (69 aa)) constitute an S1 motif domain.

The protein belongs to the polyribonucleotide nucleotidyltransferase family. The cofactor is Mg(2+).

It localises to the cytoplasm. The enzyme catalyses RNA(n+1) + phosphate = RNA(n) + a ribonucleoside 5'-diphosphate. Involved in mRNA degradation. Catalyzes the phosphorolysis of single-stranded polyribonucleotides processively in the 3'- to 5'-direction. In Clostridium perfringens (strain 13 / Type A), this protein is Polyribonucleotide nucleotidyltransferase.